The sequence spans 493 residues: uncharacterized protein (493 aa).

At Ser328 the chain carries Phosphoserine. Positions 466 to 486 (AESNSGRGQNSKTKTTSVNLS) are enriched in polar residues. Residues 466–493 (AESNSGRGQNSKTKTTSVNLSRNKRTRT) form a disordered region.

This is an uncharacterized protein from Schizosaccharomyces pombe (strain 972 / ATCC 24843) (Fission yeast).